Consider the following 190-residue polypeptide: Lipid A acyltransferase PagP (190 aa).

The first 18 residues, 1-18 (MKRLISCLTIICALNASA), serve as a signal peptide directing secretion. Residues H60, D103, and S104 contribute to the active site.

The protein belongs to the lipid A palmitoyltransferase family. Homodimer.

The protein localises to the cell outer membrane. It carries out the reaction a lipid A + a 1,2-diacyl-sn-glycero-3-phosphocholine = a hepta-acyl lipid A + a 2-acyl-sn-glycero-3-phosphocholine. The catalysed reaction is a lipid IVA + a 1,2-diacyl-sn-glycero-3-phosphocholine = a lipid IVB + a 2-acyl-sn-glycero-3-phosphocholine. The enzyme catalyses a lipid IIA + a 1,2-diacyl-sn-glycero-3-phosphocholine = a lipid IIB + a 2-acyl-sn-glycero-3-phosphocholine. In terms of biological role, transfers a fatty acid residue from the sn-1 position of a phospholipid to the N-linked hydroxyfatty acid chain on the proximal unit of lipid A or its precursors. The polypeptide is Lipid A acyltransferase PagP (Legionella pneumophila subsp. pneumophila (strain Philadelphia 1 / ATCC 33152 / DSM 7513)).